We begin with the raw amino-acid sequence, 555 residues long: Probable portal protein (555 aa).

This sequence belongs to the podoviridae head-to-tail connector protein family. As to quaternary structure, homododecamer.

The protein resides in the virion. Its function is as follows. Forms the portal vertex of the capsid. This portal plays critical roles in head assembly, genome packaging, neck/tail attachment, and genome ejection. The portal protein multimerizes as a single ring-shaped homododecamer arranged around a central channel. This chain is Probable portal protein, found in Bordetella bronchiseptica (Alcaligenes bronchisepticus).